The chain runs to 334 residues: Dolichyl-phosphate beta-glucosyltransferase (334 aa).

At 1-12 (MRALRFLIENRN) the chain is on the lumenal side. Residues 13–33 (TVFFTLLVALVLSLYLLVYLF) form a helical membrane-spanning segment. The Cytoplasmic segment spans residues 34–334 (SHTPRPPYPE…LGIYRDNKKC (301 aa)).

This sequence belongs to the glycosyltransferase 2 family.

The protein resides in the endoplasmic reticulum membrane. The catalysed reaction is a di-trans,poly-cis-dolichyl phosphate + UDP-alpha-D-glucose = a di-trans,poly-cis-dolichyl beta-D-glucosyl phosphate + UDP. The protein operates within protein modification; protein glycosylation. Functionally, endoplasmic reticulum membrane-bound UDP-glucose:dolichyl-phosphate glucosyltransferase involved in protein N-linked glycosylation. This is Dolichyl-phosphate beta-glucosyltransferase from Saccharomyces cerevisiae (strain ATCC 204508 / S288c) (Baker's yeast).